Consider the following 38-residue polypeptide: Histidine decarboxylase small chain (38 aa).

Heterohexamer of 3 large and 3 small chains. Pyruvate is required as a cofactor.

It carries out the reaction L-histidine + H(+) = histamine + CO2. The chain is Histidine decarboxylase small chain from Micrococcus sp.